The following is a 355-amino-acid chain: Ubiquinone biosynthesis protein COQ4 homolog, mitochondrial (355 aa).

Positions 134, 135, 138, and 150 each coordinate Zn(2+).

It belongs to the COQ4 family. Component of a multi-subunit COQ enzyme complex. The cofactor is Zn(2+).

It localises to the mitochondrion inner membrane. The enzyme catalyses a 4-hydroxy-3-methoxy-5-(all-trans-polyprenyl)benzoate + H(+) = a 2-methoxy-6-(all-trans-polyprenyl)phenol + CO2. It participates in cofactor biosynthesis; ubiquinone biosynthesis. In terms of biological role, lyase that catalyzes the C1-decarboxylation of 4-hydroxy-3-methoxy-5-(all-trans-polyprenyl)benzoic acid into 2-methoxy-6-(all-trans-polyprenyl)phenol during ubiquinone biosynthesis. The chain is Ubiquinone biosynthesis protein COQ4 homolog, mitochondrial from Plasmodium vivax (strain Salvador I).